The sequence spans 139 residues: MKKGALLNSDISAVISRLGHTDQIVIGDAGLPIPATTTRIDLALTQGVPGFLQVFEVVTQEMQVESAYLAQEIVKNNPQLHETLLAQLSQLEQHQGNQIALHYISHEAFKEQTKQSRAVIRSGECSPFANIILCSGVTF.

His-20 (proton donor) is an active-site residue. Residues Asp-28, His-106, and 128 to 130 (FAN) contribute to the substrate site.

Belongs to the RbsD / FucU family. RbsD subfamily. As to quaternary structure, homodecamer.

It is found in the cytoplasm. It catalyses the reaction beta-D-ribopyranose = beta-D-ribofuranose. It functions in the pathway carbohydrate metabolism; D-ribose degradation; D-ribose 5-phosphate from beta-D-ribopyranose: step 1/2. Catalyzes the interconversion of beta-pyran and beta-furan forms of D-ribose. This Yersinia enterocolitica serotype O:8 / biotype 1B (strain NCTC 13174 / 8081) protein is D-ribose pyranase.